A 367-amino-acid polypeptide reads, in one-letter code: Histidinol-phosphate aminotransferase (367 aa).

N6-(pyridoxal phosphate)lysine is present on Lys226.

The protein belongs to the class-II pyridoxal-phosphate-dependent aminotransferase family. Histidinol-phosphate aminotransferase subfamily. As to quaternary structure, homodimer. The cofactor is pyridoxal 5'-phosphate.

It carries out the reaction L-histidinol phosphate + 2-oxoglutarate = 3-(imidazol-4-yl)-2-oxopropyl phosphate + L-glutamate. It functions in the pathway amino-acid biosynthesis; L-histidine biosynthesis; L-histidine from 5-phospho-alpha-D-ribose 1-diphosphate: step 7/9. The protein is Histidinol-phosphate aminotransferase of Wolinella succinogenes (strain ATCC 29543 / DSM 1740 / CCUG 13145 / JCM 31913 / LMG 7466 / NCTC 11488 / FDC 602W) (Vibrio succinogenes).